Reading from the N-terminus, the 123-residue chain is Small ribosomal subunit protein uS12 (123 aa).

Asp-89 carries the post-translational modification 3-methylthioaspartic acid.

The protein belongs to the universal ribosomal protein uS12 family. As to quaternary structure, part of the 30S ribosomal subunit. Contacts proteins S8 and S17. May interact with IF1 in the 30S initiation complex.

Functionally, with S4 and S5 plays an important role in translational accuracy. Interacts with and stabilizes bases of the 16S rRNA that are involved in tRNA selection in the A site and with the mRNA backbone. Located at the interface of the 30S and 50S subunits, it traverses the body of the 30S subunit contacting proteins on the other side and probably holding the rRNA structure together. The combined cluster of proteins S8, S12 and S17 appears to hold together the shoulder and platform of the 30S subunit. This Citrifermentans bemidjiense (strain ATCC BAA-1014 / DSM 16622 / JCM 12645 / Bem) (Geobacter bemidjiensis) protein is Small ribosomal subunit protein uS12.